Consider the following 753-residue polypeptide: Bile salt-activated lipase (753 aa).

A signal peptide spans 1–20 (MGRLQLVVLGLTCCWAVASA). The segment at 21–121 (AKLGAVYTEG…KQVSRDLPVM (101 aa)) is heparin-binding. A disulfide bridge links C84 with C100. N207 is a glycosylation site (N-linked (GlcNAc...) (complex) asparagine). S214 (acyl-ester intermediate) is an active-site residue. An intrachain disulfide couples C266 to C277. Active-site charge relay system residues include D340 and H455. Residues 555–753 (QEATPVPPTG…EAQMPAVIRF (199 aa)) are disordered. Residues T558, T569, and T579 are each glycosylated (O-linked (GalNAc...) threonine). Tandem repeats lie at residues 559-569 (PVPPTGDSEAT), 570-580 (PVPPTGDSETA), 581-591 (PVPPTGDSGAP), 592-602 (PVPPTGDSGAP), 603-613 (PVPPTGDSGAP), 614-624 (PVPPTGDSGAP), 625-635 (PVPPTGDSGAP), 636-646 (PVPPTGDSGAP), 647-657 (PVPPTGDSGAP), 658-668 (PVPPTGDSGAP), 669-679 (PVPPTGDAGPP), 680-690 (PVPPTGDSGAP), 691-701 (PVPPTGDSGAP), 702-712 (PVTPTGDSETA), 713-723 (PVPPTGDSGAP), 724-734 (PVPPTGDSEAA), and 735-745 (PVPPTDDSKEA). Residues 559–745 (PVPPTGDSEA…VPPTDDSKEA (187 aa)) are 17 X 11 AA tandem repeats, glycodomain, O-linked (mucin type). 7 O-linked (GalNAc...) threonine glycosylation sites follow: T607, T618, T629, T640, T651, T662, and T673. Pro residues predominate over residues 668 to 683 (PPVPPTGDAGPPPVPP).

Belongs to the type-B carboxylesterase/lipase family. As to quaternary structure, interacts with CLC. Post-translationally, N- and O-glycosylated. As to expression, mammary gland and pancreas. Detected in pancreatic and duodenal juice (at protein level). Expressed by eosinophils.

Its subcellular location is the secreted. It catalyses the reaction a triacylglycerol + H2O = a diacylglycerol + a fatty acid + H(+). It carries out the reaction 1,2,3-tri-(9Z-octadecenoyl)-glycerol + H2O = di-(9Z)-octadecenoylglycerol + (9Z)-octadecenoate + H(+). The catalysed reaction is 1,2,3-trioctanoylglycerol + H2O = dioctanoylglycerol + octanoate + H(+). The enzyme catalyses a sterol ester + H2O = a sterol + a fatty acid + H(+). It catalyses the reaction cholesteryl (9Z-octadecenoate) + H2O = cholesterol + (9Z)-octadecenoate + H(+). It carries out the reaction an acetyl ester + H2O = an aliphatic alcohol + acetate + H(+). The catalysed reaction is a butanoate ester + H2O = an aliphatic alcohol + butanoate + H(+). The enzyme catalyses 9-hexadecanoyloxy-octadecanoate + H2O = 9-hydroxy-octadecanoate + hexadecanoate + H(+). It catalyses the reaction 9-(9Z-octadecenoyloxy)-octadecanoate + H2O = 9-hydroxy-octadecanoate + (9Z)-octadecenoate + H(+). It carries out the reaction 1-hexadecanoyl-sn-glycero-3-phosphocholine + H2O = sn-glycerol 3-phosphocholine + hexadecanoate + H(+). The catalysed reaction is 12-hexadecanoyloxy-octadecanoate + H2O = 12-hydroxyoctadecanoate + hexadecanoate + H(+). The enzyme catalyses 12-(9Z-octadecenoyloxy)-octadecanoate + H2O = 12-hydroxyoctadecanoate + (9Z)-octadecenoate + H(+). It catalyses the reaction 13-(9Z-octadecenoyloxy)-octadecanoate + H2O = 13-hydroxy-octadecanoate + (9Z)-octadecenoate + H(+). It carries out the reaction 9-(9Z-hexadecenoyloxy)-octadecanoate + H2O = (9Z)-hexadecenoate + 9-hydroxy-octadecanoate + H(+). The catalysed reaction is 12-(9Z-hexadecenoyloxy)-octadecanoate + H2O = 12-hydroxyoctadecanoate + (9Z)-hexadecenoate + H(+). The enzyme catalyses 13-(9Z-hexadecenoyloxy)-octadecanoate + H2O = 13-hydroxy-octadecanoate + (9Z)-hexadecenoate + H(+). It catalyses the reaction 12-octadecanoyloxy-octadecanoate + H2O = 12-hydroxyoctadecanoate + octadecanoate + H(+). It carries out the reaction 13-octadecanoyloxy-octadecanoate + H2O = 13-hydroxy-octadecanoate + octadecanoate + H(+). The catalysed reaction is 5-(9Z-hexadecenoyloxy)-octadecanoate + H2O = 5-hydroxy-octadecanoate + (9Z)-hexadecenoate + H(+). The enzyme catalyses 9-octadecanoyloxy-octadecanoate + H2O = 9-hydroxy-octadecanoate + octadecanoate + H(+). With respect to regulation, activated by bile salts such as sodium taurocholate. In terms of biological role, catalyzes the hydrolysis of a wide range of substrates including cholesteryl esters, phospholipids, lysophospholipids, di- and tri-acylglycerols, and fatty acid esters of hydroxy fatty acids (FAHFAs). Preferentially hydrolyzes FAHFAs with the ester bond further away from the carboxylate. Unsaturated FAHFAs are hydrolyzed more quickly than saturated FAHFAs. Has an essential role in the complete digestion of dietary lipids and their intestinal absorption, along with the absorption of fat-soluble vitamins. The sequence is that of Bile salt-activated lipase (CEL) from Homo sapiens (Human).